We begin with the raw amino-acid sequence, 210 residues long: Leucyl/phenylalanyl-tRNA--protein transferase (210 aa).

Belongs to the L/F-transferase family.

Its subcellular location is the cytoplasm. The enzyme catalyses N-terminal L-lysyl-[protein] + L-leucyl-tRNA(Leu) = N-terminal L-leucyl-L-lysyl-[protein] + tRNA(Leu) + H(+). The catalysed reaction is N-terminal L-arginyl-[protein] + L-leucyl-tRNA(Leu) = N-terminal L-leucyl-L-arginyl-[protein] + tRNA(Leu) + H(+). It carries out the reaction L-phenylalanyl-tRNA(Phe) + an N-terminal L-alpha-aminoacyl-[protein] = an N-terminal L-phenylalanyl-L-alpha-aminoacyl-[protein] + tRNA(Phe). Functions in the N-end rule pathway of protein degradation where it conjugates Leu, Phe and, less efficiently, Met from aminoacyl-tRNAs to the N-termini of proteins containing an N-terminal arginine or lysine. This is Leucyl/phenylalanyl-tRNA--protein transferase from Roseobacter denitrificans (strain ATCC 33942 / OCh 114) (Erythrobacter sp. (strain OCh 114)).